The sequence spans 290 residues: MPSLRDIRNRIGSVRSTRQITKAMKMVSAAKLRRAQDAVLKTRPYAVLLDQTLSRLAARAAAEEQVAHPLLAPRAQRTAEVVVVTSDRGLAGGFNSNICRFVQRFLTENADRFERIALSTVGKKGREYFKARRLDIRKDYTGVHANLAYEKAEALAREATERYLAGEVDAVFLAYNEFKSAISQKQVVVQLLPIDTSAAGADATGIDFKYEPSREALLAELLPRHVAMQVWRALLESAASEHGARMSAMESATKNAEEMIASLSLQYNRARQAYVTKELMEIVGGAEALK.

Belongs to the ATPase gamma chain family. In terms of assembly, F-type ATPases have 2 components, CF(1) - the catalytic core - and CF(0) - the membrane proton channel. CF(1) has five subunits: alpha(3), beta(3), gamma(1), delta(1), epsilon(1). CF(0) has three main subunits: a, b and c.

It localises to the cell inner membrane. Its function is as follows. Produces ATP from ADP in the presence of a proton gradient across the membrane. The gamma chain is believed to be important in regulating ATPase activity and the flow of protons through the CF(0) complex. This Anaeromyxobacter dehalogenans (strain 2CP-1 / ATCC BAA-258) protein is ATP synthase gamma chain.